We begin with the raw amino-acid sequence, 251 residues long: tRNA-cytidine(32) 2-sulfurtransferase 2 (251 aa).

The PP-loop motif motif lies at 33–38 (SGGKDS). Residues C108, C111, and C199 each contribute to the [4Fe-4S] cluster site.

Belongs to the TtcA family. In terms of assembly, homodimer. The cofactor is Mg(2+). Requires [4Fe-4S] cluster as cofactor.

It is found in the cytoplasm. The catalysed reaction is cytidine(32) in tRNA + S-sulfanyl-L-cysteinyl-[cysteine desulfurase] + AH2 + ATP = 2-thiocytidine(32) in tRNA + L-cysteinyl-[cysteine desulfurase] + A + AMP + diphosphate + H(+). It functions in the pathway tRNA modification. Catalyzes the ATP-dependent 2-thiolation of cytidine in position 32 of tRNA, to form 2-thiocytidine (s(2)C32). The sulfur atoms are provided by the cysteine/cysteine desulfurase (IscS) system. The sequence is that of tRNA-cytidine(32) 2-sulfurtransferase 2 from Francisella tularensis subsp. tularensis (strain FSC 198).